The sequence spans 530 residues: MQEIQFIVPAALHDEMLRLRNEKQMDFLESLTGMDWGVADEKDAPEKLRGLGVVYHLESTVTGERIALKTAVTDRERPEIPSVSDIWKIADFYEREVFDYYGIVFVGHPDMRRLYLRNDWVGYPMRKDNDPEKDNPLCMANEETFDTTQEIELNPDGTIKNREMKLFGEEEYVVNIGPQHPATHGVMRFRVSLEGEIIRKIDANCGYIHRGIEKMNESLTYPQTLALTDRLDYLGAHQNRHALCMCIEKAMGIEVSDRVKYIRTIMDELQRIDSHLLFYSALAMDLGALTAFFYGFRDREKILDIFEETCGGRLIMNYNTIGGVQADLHPNFVKRVKEFIPYMRGIIHEYHDIFTGNIIAQSRMKGVGVLSREDAISFGCTGGTGRASGWACDVRKRIPYGVYDKVDFQEIVYTEGDCFARYLVRMDEIMESLKIIEQLIDNIPEGPYQEKMKPIIRVPEGSYYAAVEGSRGEFGVFLESQGDKMPYRLHYRATGLPLVAAIDTICRGAKIADLIAIGGTLDYVVPDIDR.

The interval 1–144 (MQEIQFIVPA…NPLCMANEET (144 aa)) is NADH dehydrogenase I subunit C. Positions 171-530 (EYVVNIGPQH…LDYVVPDIDR (360 aa)) are NADH dehydrogenase I subunit D.

It in the N-terminal section; belongs to the complex I 30 kDa subunit family. This sequence in the C-terminal section; belongs to the complex I 49 kDa subunit family. In terms of assembly, NDH-1 is composed of 13 different subunits. Subunits NuoB, CD, E, F, and G constitute the peripheral sector of the complex.

It is found in the cell inner membrane. The catalysed reaction is a quinone + NADH + 5 H(+)(in) = a quinol + NAD(+) + 4 H(+)(out). Its function is as follows. NDH-1 shuttles electrons from NADH, via FMN and iron-sulfur (Fe-S) centers, to quinones in the respiratory chain. The immediate electron acceptor for the enzyme in this species is believed to be a menaquinone. Couples the redox reaction to proton translocation (for every two electrons transferred, four hydrogen ions are translocated across the cytoplasmic membrane), and thus conserves the redox energy in a proton gradient. The protein is NADH-quinone oxidoreductase subunit C/D of Bacteroides thetaiotaomicron (strain ATCC 29148 / DSM 2079 / JCM 5827 / CCUG 10774 / NCTC 10582 / VPI-5482 / E50).